A 51-amino-acid polypeptide reads, in one-letter code: Sperm protamine P1 (51 aa).

2 disulfides stabilise this stretch: Cys-7–Cys-15 and Cys-38–Cys-48.

This sequence belongs to the protamine P1 family. In terms of assembly, cross-linked by interchain disulfide bonds around the DNA-helix. Phosphorylated by SRPK1. Testis.

It is found in the nucleus. The protein localises to the chromosome. In terms of biological role, protamines substitute for histones in the chromatin of sperm during the haploid phase of spermatogenesis. They compact sperm DNA into a highly condensed, stable and inactive complex. In Rattus norvegicus (Rat), this protein is Sperm protamine P1 (Prm1).